The following is a 1043-amino-acid chain: Non-canonical nonribosomal peptide synthetase cpsA (1043 aa).

An adenylation (A) domain region spans residues 41-386 (RRAQENPSAP…IGGDGVSPGY (346 aa)). Positions 549–626 (QDASTTISRL…QMARYVDEGG (78 aa)) constitute a Carrier domain. At Ser586 the chain carries O-(pantetheine 4'-phosphoryl)serine. The segment at 671–914 (MTGATGFVGA…FVPVDYLVDA (244 aa)) is short-chain dehydrogenase/reductase (R) domain. A Thioester reductase (TE) domain is found at 672–915 (TGATGFVGAF…VPVDYLVDAI (244 aa)).

The protein belongs to the NRP synthetase family. It depends on pantetheine 4'-phosphate as a cofactor.

The catalysed reaction is L-valine + ATP + NADPH + H(+) = L-valinal + AMP + diphosphate + NADP(+). The enzyme catalyses L-tryptophan + ATP + NADPH + H(+) = L-tryptophanal + AMP + diphosphate + NADP(+). It functions in the pathway alkaloid biosynthesis. In terms of biological role, non-canonical nonribosomal peptide synthetase; part of the gene cluster that mediates the biosynthesis of campesine G, a dimeric indole piperazine alkaloid that shows good insecticidal activity Galleria mellonella. CpsA catalyzes the first steps of the pathway by producing L-tryptophanal and L-valinal from their respective amino-acids. These products condensate spontaneously to form trypyl-valyl pyrazine also known as didehydrocampesine A. The NmrA-like family domain-containing oxidoreductase cpsB is the next enzyme in cps pathway and reduces the unstable didehydrocampesine A to campesine A. The methyltransferase cpsF and the acetyltransferase cpsE both recognize N13 of piperazine ring to carry out methylation and acetylation of campesine A to produce campesine C and B, respectively. The cytochrome P450 monooxygenase cpsD then acts as a dimerase that catalyzes oxidative heterocoupling between campesine B and C to produce heterodimers with unexpected 6/5/6/6/6/6/5/6 eight-ring scaffold called campesine D. Finally,the cytochrome P450 monooxygenase cpsC is a regioselective dehydrogenase that catalyzes dehydrogenation reaction towards C2-N1 to produce campesine G. The sequence is that of Non-canonical nonribosomal peptide synthetase cpsA from Aspergillus campestris (strain IBT 28561).